Reading from the N-terminus, the 99-residue chain is Small ribosomal subunit protein uS17 (99 aa).

The protein belongs to the universal ribosomal protein uS17 family. As to quaternary structure, part of the 30S ribosomal subunit.

Functionally, one of the primary rRNA binding proteins, it binds specifically to the 5'-end of 16S ribosomal RNA. In Thermosipho melanesiensis (strain DSM 12029 / CIP 104789 / BI429), this protein is Small ribosomal subunit protein uS17.